Here is a 287-residue protein sequence, read N- to C-terminus: Ribosomal RNA small subunit methyltransferase I (287 aa).

Belongs to the methyltransferase superfamily. RsmI family.

It is found in the cytoplasm. It carries out the reaction cytidine(1402) in 16S rRNA + S-adenosyl-L-methionine = 2'-O-methylcytidine(1402) in 16S rRNA + S-adenosyl-L-homocysteine + H(+). Its function is as follows. Catalyzes the 2'-O-methylation of the ribose of cytidine 1402 (C1402) in 16S rRNA. The chain is Ribosomal RNA small subunit methyltransferase I from Streptococcus pyogenes serotype M18 (strain MGAS8232).